The chain runs to 494 residues: Amidophosphoribosyltransferase (494 aa).

Positions 1-10 are excised as a propeptide; it reads MFNYSGLNEE. Cysteine 11 functions as the Nucleophile in the catalytic mechanism. The Glutamine amidotransferase type-2 domain maps to 11–231; it reads CGVFGIWNHP…AGEYVVINDK (221 aa). 3 residues coordinate Mg(2+): serine 294, aspartate 356, and aspartate 357.

In the C-terminal section; belongs to the purine/pyrimidine phosphoribosyltransferase family. The cofactor is Mg(2+).

The enzyme catalyses 5-phospho-beta-D-ribosylamine + L-glutamate + diphosphate = 5-phospho-alpha-D-ribose 1-diphosphate + L-glutamine + H2O. Its pathway is purine metabolism; IMP biosynthesis via de novo pathway; N(1)-(5-phospho-D-ribosyl)glycinamide from 5-phospho-alpha-D-ribose 1-diphosphate: step 1/2. Functionally, catalyzes the formation of phosphoribosylamine from phosphoribosylpyrophosphate (PRPP) and glutamine. The sequence is that of Amidophosphoribosyltransferase from Staphylococcus aureus (strain COL).